Reading from the N-terminus, the 384-residue chain is Dual-specificity RNA methyltransferase RlmN (384 aa).

Catalysis depends on E105, which acts as the Proton acceptor. The 240-residue stretch at 111-350 (EVDRATLCVS…TIVRKTRGDD (240 aa)) folds into the Radical SAM core domain. A disulfide bridge connects residues C118 and C355. [4Fe-4S] cluster-binding residues include C125, C129, and C132. S-adenosyl-L-methionine-binding positions include 179–180 (GE), S211, 233–235 (SLH), and N312. The S-methylcysteine intermediate role is filled by C355.

The protein belongs to the radical SAM superfamily. RlmN family. [4Fe-4S] cluster is required as a cofactor.

Its subcellular location is the cytoplasm. The catalysed reaction is adenosine(2503) in 23S rRNA + 2 reduced [2Fe-2S]-[ferredoxin] + 2 S-adenosyl-L-methionine = 2-methyladenosine(2503) in 23S rRNA + 5'-deoxyadenosine + L-methionine + 2 oxidized [2Fe-2S]-[ferredoxin] + S-adenosyl-L-homocysteine. It catalyses the reaction adenosine(37) in tRNA + 2 reduced [2Fe-2S]-[ferredoxin] + 2 S-adenosyl-L-methionine = 2-methyladenosine(37) in tRNA + 5'-deoxyadenosine + L-methionine + 2 oxidized [2Fe-2S]-[ferredoxin] + S-adenosyl-L-homocysteine. Functionally, specifically methylates position 2 of adenine 2503 in 23S rRNA and position 2 of adenine 37 in tRNAs. m2A2503 modification seems to play a crucial role in the proofreading step occurring at the peptidyl transferase center and thus would serve to optimize ribosomal fidelity. This is Dual-specificity RNA methyltransferase RlmN from Escherichia coli O9:H4 (strain HS).